Consider the following 461-residue polypeptide: Cysteine--tRNA ligase (461 aa).

Position 30 (Cys30) interacts with Zn(2+). The short motif at 32–42 (VTVYDLCHIGH) is the 'HIGH' region element. Zn(2+) is bound by residues Cys211, His236, and Glu240. Residues 268 to 272 (KMSKS) carry the 'KMSKS' region motif. An ATP-binding site is contributed by Lys271.

The protein belongs to the class-I aminoacyl-tRNA synthetase family. Monomer. Requires Zn(2+) as cofactor.

The protein resides in the cytoplasm. The enzyme catalyses tRNA(Cys) + L-cysteine + ATP = L-cysteinyl-tRNA(Cys) + AMP + diphosphate. The chain is Cysteine--tRNA ligase from Shewanella sp. (strain ANA-3).